The primary structure comprises 374 residues: GDSL esterase/lipase At3g50400 (374 aa).

The N-terminal stretch at Met1–Ala26 is a signal peptide. Ser41 (nucleophile) is an active-site residue. 2 N-linked (GlcNAc...) asparagine glycosylation sites follow: Asn104 and Asn125. Catalysis depends on residues Asp339 and His342.

The protein belongs to the 'GDSL' lipolytic enzyme family.

The protein localises to the secreted. In Arabidopsis thaliana (Mouse-ear cress), this protein is GDSL esterase/lipase At3g50400.